We begin with the raw amino-acid sequence, 310 residues long: Phosphoribosylaminoimidazole-succinocarboxamide synthase (310 aa).

The protein belongs to the SAICAR synthetase family.

The enzyme catalyses 5-amino-1-(5-phospho-D-ribosyl)imidazole-4-carboxylate + L-aspartate + ATP = (2S)-2-[5-amino-1-(5-phospho-beta-D-ribosyl)imidazole-4-carboxamido]succinate + ADP + phosphate + 2 H(+). It functions in the pathway purine metabolism; IMP biosynthesis via de novo pathway; 5-amino-1-(5-phospho-D-ribosyl)imidazole-4-carboxamide from 5-amino-1-(5-phospho-D-ribosyl)imidazole-4-carboxylate: step 1/2. In Dechloromonas aromatica (strain RCB), this protein is Phosphoribosylaminoimidazole-succinocarboxamide synthase.